Reading from the N-terminus, the 418-residue chain is Tryptophan synthase beta chain (418 aa).

A compositionally biased stretch (polar residues) spans 1–17; that stretch reads MTSTLPNASTPDPSSLQ. Residues 1–23 form a disordered region; the sequence is MTSTLPNASTPDPSSLQPAVRPG. An N6-(pyridoxal phosphate)lysine modification is found at K111.

This sequence belongs to the TrpB family. Tetramer of two alpha and two beta chains. Requires pyridoxal 5'-phosphate as cofactor.

It catalyses the reaction (1S,2R)-1-C-(indol-3-yl)glycerol 3-phosphate + L-serine = D-glyceraldehyde 3-phosphate + L-tryptophan + H2O. It participates in amino-acid biosynthesis; L-tryptophan biosynthesis; L-tryptophan from chorismate: step 5/5. In terms of biological role, the beta subunit is responsible for the synthesis of L-tryptophan from indole and L-serine. This is Tryptophan synthase beta chain from Synechococcus sp. (strain CC9605).